Consider the following 596-residue polypeptide: Succinate dehydrogenase flavoprotein subunit (596 aa).

Residues Gly18 to Gly23, Thr41 to Gly56, and Asp225 each bind FAD. His49 is subject to Tele-8alpha-FAD histidine. Substrate-binding residues include His246 and Thr258. The active-site Proton acceptor is the Arg290. Substrate is bound at residue His357. Glu391 provides a ligand contact to FAD. Arg402 provides a ligand contact to substrate. Position 407-408 (Ser407–Leu408) interacts with FAD.

This sequence belongs to the FAD-dependent oxidoreductase 2 family. FRD/SDH subfamily. As to quaternary structure, part of an enzyme complex containing four subunits: a flavoprotein, an iron-sulfur, cytochrome b-556, and a hydrophobic anchor protein. It depends on FAD as a cofactor.

The protein resides in the cell inner membrane. The enzyme catalyses a quinone + succinate = fumarate + a quinol. It participates in carbohydrate metabolism; tricarboxylic acid cycle; fumarate from succinate (bacterial route): step 1/1. This Rickettsia felis (strain ATCC VR-1525 / URRWXCal2) (Rickettsia azadi) protein is Succinate dehydrogenase flavoprotein subunit (sdhA).